Consider the following 199-residue polypeptide: Putative peroxiredoxin ycf42 (199 aa).

The 158-residue stretch at 8–165 folds into the Thioredoxin domain; sequence LRVGQLAPDF…TLRVLQAIQY (158 aa). The active-site Cysteine sulfenic acid (-SOH) intermediate is the cysteine 53.

The protein belongs to the peroxiredoxin family. AhpC/Prx1 subfamily. In terms of assembly, homodimer; disulfide-linked, upon oxidation. Post-translationally, the Cys-53-SH group is the primary site of oxidation by H(2)O(2), and the oxidized Cys-53 (probably Cys-SOH) rapidly reacts with Cys-174-SH of the other subunit to form an intermolecular disulfide. This disulfide is subsequently reduced by thioredoxin.

The protein resides in the plastid. Its subcellular location is the chloroplast. The enzyme catalyses a hydroperoxide + [thioredoxin]-dithiol = an alcohol + [thioredoxin]-disulfide + H2O. Functionally, thiol-specific peroxidase that catalyzes the reduction of hydrogen peroxide and organic hydroperoxides to water and alcohols, respectively. Plays a role in cell protection against oxidative stress by detoxifying peroxides. This chain is Putative peroxiredoxin ycf42 (ycf42), found in Pyropia yezoensis (Susabi-nori).